Here is a 1193-residue protein sequence, read N- to C-terminus: Major DNA-binding protein (1193 aa).

A Required for filament formation motif is present at residues 827 to 828; the sequence is FW. The segment at 1125-1145 is disordered; that stretch reads AGGGPAGSAGGPESGGGAGAA. The tract at residues 1170–1193 is required for nuclear localization; the sequence is PTAAALDGGGDGDECAFPAKRLRL.

It belongs to the herpesviridae major DNA-binding protein family. As to quaternary structure, homooligomers. Forms double-helical filaments necessary for the formation of replication compartments within the host nucleus. Interacts with the origin-binding protein. Interacts with the helicase primase complex; this interaction stimulates primer synthesis activity of the helicase-primase complex. Interacts with the DNA polymerase. Interacts with the alkaline exonuclease; this interaction increases its nuclease processivity.

The protein localises to the host nucleus. Plays several crucial roles in viral infection. Participates in the opening of the viral DNA origin to initiate replication by interacting with the origin-binding protein. May disrupt loops, hairpins and other secondary structures present on ssDNA to reduce and eliminate pausing of viral DNA polymerase at specific sites during elongation. Promotes viral DNA recombination by performing strand-transfer, characterized by the ability to transfer a DNA strand from a linear duplex to a complementary single-stranded DNA circle. Can also catalyze the renaturation of complementary single strands. Additionally, reorganizes the host cell nucleus, leading to the formation of prereplicative sites and replication compartments. This process is driven by the protein which can form double-helical filaments in the absence of DNA. The polypeptide is Major DNA-binding protein (Tupaiid herpesvirus (strain 2) (TuHV-2)).